A 195-amino-acid polypeptide reads, in one-letter code: Ras-related protein rac-2 (195 aa).

10-17 (GDGAVGKT) contributes to the GTP binding site. The Effector region signature appears at 32–40 (YILTVFDTY). GTP contacts are provided by residues 57–61 (DTAGQ) and 115–118 (TKAD). Residues 176–195 (GLTPPQTPQTRAKKSNCTVL) form a disordered region. Residue C192 is modified to Cysteine methyl ester. C192 carries the S-geranylgeranyl cysteine lipid modification. A propeptide spans 193–195 (TVL) (removed in mature form).

The protein belongs to the small GTPase superfamily. Rho family.

It is found in the cell membrane. In terms of biological role, during gonad morphogenesis, plays a role in distal tip cell (DTC)-mediated guidance of gonad elongation. The protein is Ras-related protein rac-2 (rac-2) of Caenorhabditis elegans.